Here is a 489-residue protein sequence, read N- to C-terminus: 3-octaprenyl-4-hydroxybenzoate carboxy-lyase (489 aa).

N172 provides a ligand contact to Mn(2+). Prenylated FMN contacts are provided by residues 175–177 (IYR), 189–191 (RWL), and 194–195 (RG). E238 is a binding site for Mn(2+). The Proton donor role is filled by D287.

The protein belongs to the UbiD family. Homohexamer. Prenylated FMN serves as cofactor. It depends on Mn(2+) as a cofactor.

The protein resides in the cell membrane. The catalysed reaction is a 4-hydroxy-3-(all-trans-polyprenyl)benzoate + H(+) = a 2-(all-trans-polyprenyl)phenol + CO2. It participates in cofactor biosynthesis; ubiquinone biosynthesis. Functionally, catalyzes the decarboxylation of 3-octaprenyl-4-hydroxy benzoate to 2-octaprenylphenol, an intermediate step in ubiquinone biosynthesis. The protein is 3-octaprenyl-4-hydroxybenzoate carboxy-lyase of Klebsiella pneumoniae (strain 342).